Consider the following 635-residue polypeptide: Capsid protein (635 aa).

Residues 571–608 are disordered; sequence KAPETEKEEERESETSFTSAESSSEGDGSSDDQAERRA. Positions 573–584 are enriched in basic and acidic residues; that stretch reads PETEKEEERESE. Residues 585 to 597 are compositionally biased toward low complexity; the sequence is TSFTSAESSSEGD.

It belongs to the anelloviridae capsid protein family.

The protein localises to the virion. Functionally, self-assembles to form an icosahedral capsid with a T=1 symmetry, about 30 nm in diameter, and consisting of 60 capsid proteins. The capsid encapsulates the genomic DNA. Capsid protein is involved in attachment and entry into the host cell. This is Capsid protein from Torque teno sus virus 1 (isolate Sd-TTV31).